Here is a 142-residue protein sequence, read N- to C-terminus: Deoxyuridine 5'-triphosphate nucleotidohydrolase (142 aa).

Substrate is bound by residues 62–64, N75, and 79–81; these read RSG and TID.

It belongs to the dUTPase family. Mg(2+) is required as a cofactor.

The catalysed reaction is dUTP + H2O = dUMP + diphosphate + H(+). The protein operates within pyrimidine metabolism; dUMP biosynthesis; dUMP from dCTP (dUTP route): step 2/2. In terms of biological role, this enzyme is involved in nucleotide metabolism: it produces dUMP, the immediate precursor of thymidine nucleotides and it decreases the intracellular concentration of dUTP so that uracil cannot be incorporated into DNA. This is Deoxyuridine 5'-triphosphate nucleotidohydrolase from Trichodesmium erythraeum (strain IMS101).